Here is a 72-residue protein sequence, read N- to C-terminus: Rubredoxin (72 aa).

The Rubredoxin-like domain maps to 19–72 (DAVLECKICWQRYDPAEGDPVWQIPPGTPFAALPAHWRCPRCDGDREQFMVVDG). Positions 24, 27, 57, and 60 each coordinate Fe cation.

Belongs to the rubredoxin family. Requires Fe(3+) as cofactor.

In terms of biological role, rubredoxin is a small nonheme, iron protein lacking acid-labile sulfide. Its single Fe, chelated to 4 Cys, functions as an electron acceptor and may also stabilize the conformation of the molecule. Could be involved in hydrogenase-linked redox processes. The protein is Rubredoxin (hoxR) of Azotobacter vinelandii.